Here is a 114-residue protein sequence, read N- to C-terminus: Large ribosomal subunit protein bL19 (114 aa).

The protein belongs to the bacterial ribosomal protein bL19 family.

Its function is as follows. This protein is located at the 30S-50S ribosomal subunit interface and may play a role in the structure and function of the aminoacyl-tRNA binding site. The chain is Large ribosomal subunit protein bL19 from Clostridium botulinum (strain Loch Maree / Type A3).